The sequence spans 197 residues: Putative AgrB-like protein (197 aa).

4 helical membrane passes run 29–49 (FGFTIILHYLFTLLLVLAVGL), 79–99 (SIGCTLLSVLFITAISWVPFA), 102–122 (YAWILYGISGGLLIWKYAPYY), and 143–163 (ILIVLFIILAMLMSTQGLVLG).

The protein belongs to the AgrB family.

It localises to the cell membrane. May be involved in the proteolytic processing of a quorum sensing system signal molecule precursor. The polypeptide is Putative AgrB-like protein (Halalkalibacterium halodurans (strain ATCC BAA-125 / DSM 18197 / FERM 7344 / JCM 9153 / C-125) (Bacillus halodurans)).